Consider the following 605-residue polypeptide: Elongation factor 4 (605 aa).

One can recognise a tr-type G domain in the interval 9–191 (DTIRNFCIIA…AIIKRVPAPV (183 aa)). GTP contacts are provided by residues 21-26 (DHGKST) and 138-141 (NKID).

This sequence belongs to the TRAFAC class translation factor GTPase superfamily. Classic translation factor GTPase family. LepA subfamily.

It is found in the cell inner membrane. It catalyses the reaction GTP + H2O = GDP + phosphate + H(+). In terms of biological role, required for accurate and efficient protein synthesis under certain stress conditions. May act as a fidelity factor of the translation reaction, by catalyzing a one-codon backward translocation of tRNAs on improperly translocated ribosomes. Back-translocation proceeds from a post-translocation (POST) complex to a pre-translocation (PRE) complex, thus giving elongation factor G a second chance to translocate the tRNAs correctly. Binds to ribosomes in a GTP-dependent manner. In Chlorobium phaeobacteroides (strain BS1), this protein is Elongation factor 4.